A 104-amino-acid polypeptide reads, in one-letter code: Large ribosomal subunit protein uL24 (104 aa).

The protein belongs to the universal ribosomal protein uL24 family. Part of the 50S ribosomal subunit.

Functionally, one of two assembly initiator proteins, it binds directly to the 5'-end of the 23S rRNA, where it nucleates assembly of the 50S subunit. In terms of biological role, one of the proteins that surrounds the polypeptide exit tunnel on the outside of the subunit. The chain is Large ribosomal subunit protein uL24 from Pseudomonas savastanoi pv. phaseolicola (strain 1448A / Race 6) (Pseudomonas syringae pv. phaseolicola (strain 1448A / Race 6)).